Consider the following 613-residue polypeptide: 8-methylmenaquinol:fumarate reductase flavoprotein subunit (613 aa).

Positions 1 to 33 (MSEQFTRREFLQSACITMGALAVSTSGVDRAFA) form a signal peptide, tat-type signal. FAD-binding positions include 53-58 (GSGAAG), 78-93 (SKVMPTRSATTMAEGG), and aspartate 255. The substrate site is built by histidine 276 and threonine 288. Arginine 319 functions as the Proton acceptor in the catalytic mechanism. Histidine 387 lines the substrate pocket. Glutamate 413 contacts FAD. Residue arginine 424 participates in substrate binding. 429–430 (SL) serves as a coordination point for FAD.

This sequence belongs to the FAD-dependent oxidoreductase 2 family. FRD/SDH subfamily. In terms of assembly, the MFR complex is composed of three subunits: a flavoprotein (SdhA), an iron-sulfur protein (SdhB), and one hydrophobic anchor protein (SdhE). The cofactor is FAD. Predicted to be exported by the Tat system. The position of the signal peptide cleavage has not been experimentally proven.

The protein resides in the periplasm. It localises to the cell membrane. It carries out the reaction 8-methylmenaquinone-6 + succinate = 8-methylmenaquinol-6 + fumarate. Its function is as follows. Flavoprotein subunit of 8-methylmenaquinol:fumarate reductase (MFR), that catalyzes the reduction of fumarate using 8-methylmenaquinol-6 as electron donor. The complex shows no succinate oxidation activity. Is involved in anaerobic metabolism. SdhA contains the dicarboxylate reduction site. This is 8-methylmenaquinol:fumarate reductase flavoprotein subunit from Wolinella succinogenes (strain ATCC 29543 / DSM 1740 / CCUG 13145 / JCM 31913 / LMG 7466 / NCTC 11488 / FDC 602W) (Vibrio succinogenes).